A 229-amino-acid polypeptide reads, in one-letter code: Large ribosomal subunit protein uL1 (229 aa).

Belongs to the universal ribosomal protein uL1 family. In terms of assembly, part of the 50S ribosomal subunit.

Binds directly to 23S rRNA. The L1 stalk is quite mobile in the ribosome, and is involved in E site tRNA release. Functionally, protein L1 is also a translational repressor protein, it controls the translation of the L11 operon by binding to its mRNA. This chain is Large ribosomal subunit protein uL1, found in Streptococcus suis (strain 98HAH33).